A 319-amino-acid polypeptide reads, in one-letter code: Acetyl-coenzyme A carboxylase carboxyl transferase subunit alpha (319 aa).

One can recognise a CoA carboxyltransferase C-terminal domain in the interval 35-296 (DLDKEIEQLE…KATLVANLAE (262 aa)).

It belongs to the AccA family. Acetyl-CoA carboxylase is a heterohexamer composed of biotin carboxyl carrier protein (AccB), biotin carboxylase (AccC) and two subunits each of ACCase subunit alpha (AccA) and ACCase subunit beta (AccD).

Its subcellular location is the cytoplasm. It catalyses the reaction N(6)-carboxybiotinyl-L-lysyl-[protein] + acetyl-CoA = N(6)-biotinyl-L-lysyl-[protein] + malonyl-CoA. The protein operates within lipid metabolism; malonyl-CoA biosynthesis; malonyl-CoA from acetyl-CoA: step 1/1. Functionally, component of the acetyl coenzyme A carboxylase (ACC) complex. First, biotin carboxylase catalyzes the carboxylation of biotin on its carrier protein (BCCP) and then the CO(2) group is transferred by the carboxyltransferase to acetyl-CoA to form malonyl-CoA. The protein is Acetyl-coenzyme A carboxylase carboxyl transferase subunit alpha of Photobacterium profundum (strain SS9).